The sequence spans 378 residues: Stimulator of interferon genes protein (378 aa).

At 1 to 17 (MPYSNLHPAIPRPRGHR) the chain is on the cytoplasmic side. A mediates interaction with ZDHHC1 and ZDHHC11 region spans residues 1-189 (MPYSNLHPAI…MFNQLHNNML (189 aa)). Residues 18 to 34 (SKYVALIFLVASLMILW) traverse the membrane as a helical segment. Lys19 is covalently cross-linked (Glycyl lysine isopeptide (Lys-Gly) (interchain with G-Cter in ubiquitin)). The Lumenal segment spans residues 35–44 (VAKDPPNHTL). Residues 45–69 (KYLALHLASHELGLLLKNLCCLAEE) form a helical membrane-spanning segment. The Cytoplasmic segment spans residues 70–91 (LCHVQSRYQGSYWKAVRACLGC). 2 S-palmitoyl cysteine lipidation sites follow: Cys88 and Cys91. A helical membrane pass occupies residues 92-106 (PIHCMAMILLSSYFY). Residues 107 to 115 (FLQNTADIY) are Lumenal-facing. A helical transmembrane segment spans residues 116-133 (LSWMFGLLVLYKSLSMLL). The Cytoplasmic portion of the chain corresponds to 134–378 (GLQSLTPAEV…QPLPLRTDLI (245 aa)). A Glycyl lysine isopeptide (Lys-Gly) (interchain with G-Cter in ubiquitin) cross-link involves residue Lys150. The tract at residues 152–339 (LNVAHGLAWS…RHIRQEEKEE (188 aa)) is cyclic dinucleotide-binding domain (CBD). Gly165 is a binding site for 3',3'-c-di-GMP. Residue Tyr166 participates in 2',3'-cUAMP binding. Residue Tyr166 coordinates 3',3'-cGAMP. Residue Lys235 forms a Glycyl lysine isopeptide (Lys-Gly) (interchain with G-Cter in ubiquitin) linkage. Arg237 serves as a coordination point for 2',3'-cUAMP. Arg237 serves as a coordination point for 3',3'-cGAMP. Arg237 lines the 2',3'-cGAMP pocket. 3',3'-c-di-GMP contacts are provided by residues 237 to 240 (RVYS) and Thr262. Position 240 is a phosphoserine (Ser240). Residue Thr262 participates in 2',3'-cUAMP binding. Thr262 provides a ligand contact to 2',3'-cGAMP. A Glycyl lysine isopeptide (Lys-Gly) (interchain with G-Cter in SUMO) cross-link involves residue Lys337. The interval 339-378 (EVTMNAPMTSVAPPPSVLSQEPRLLISGMDQPLPLRTDLI) is C-terminal tail (CTT). Phosphoserine; by MAP3K7 is present on Ser354. 2 positions are modified to phosphoserine; by TBK1: Ser357 and Ser365. The short motif at 362-365 (LLIS) is the pLxIS motif element.

Belongs to the STING family. Homodimer; forms a homodimer in absence of cyclic nucleotide (c-di-GMP or cGAMP); 'Lys-63'-linked ubiquitination at Lys-150 is required for homodimerization. Homotetramer; in presence of cyclic nucleotide (c-di-GMP or cGAMP), forms tetramers and higher-order oligomers through side-by-side packing. Interacts (when phosphorylated) with IRF3; following activation and phosphorylation on the pLxIS motif by TBK1, recruits IRF3. Interacts with RIGI, MAVS and SSR2. Interacts with RNF5 and TRIM56. Interacts with TBK1; when homodimer, leading to subsequent production of IFN-beta. Interacts with IFIT1 and IFIT2. Interacts with TRIM29; this interaction induces STING1 ubiquitination and subsequent degradation. Associates with the MHC-II complex. Interacts with STEEP1; interaction takes place upon cGAMP-activation and STING1 phosphorylation by MAP3K7/TAK1 and promotes STING1 translocation to COPII vesicles. Interacts with SEC24A, SEC24B and SEC24C; promoting translocation to COPII vesicles. Interacts (when ubiquitinated) with SQSTM1; leading to relocalization to autophagosomes. Interacts with SURF4. Interacts with HNRNPA2B1. Interacts with ZDHHC1; ZDHHC1 constitutively interacts with STING1 and in presence of DNA viruses activates it by promoting its cGAMP-induced oligomerization and the recruitment of downstream signaling components. Interacts with ZDHHC11; in presence of DNA viruses promotes the recruitment of IRF3 to STING1. Interacts with TOMM70. Interacts with IFI204. Interacts with TAB1; promoting recruitment of TAB1 to the endoplasmic reticulum membrane and subsequent activation of MAP3K7/TAK1. Interacts (via transmembrane domain) with TMEM203. Interacts with DDX41. In terms of processing, phosphorylation by TBK1 leads to activation and production of IFN-beta. Following cyclic nucleotide (c-di-GMP or cGAMP)-binding, activation and translocation from the endoplasmic reticulum, STING1 is phosphorylated by TBK1 at Ser-365 in the pLxIS motif. The phosphorylated pLxIS motif constitutes an IRF3-binding motif, leading to recruitment of the transcription factor IRF3 to induce type-I interferons and other cytokines. The phosphorylated pLxIS motif facilitates SENP2 recruitment during late phase of viral infection. Phosphorylated on tyrosine residues upon MHC-II aggregation. Dephosphorylation by PPP6C leads to inactivation and decreased production of IFN-beta. Phosphorylation at Ser-357 is also required to activate IRF3. Phosphorylation at Ser-354 by MAP3K7/TAK1 facilitates its interaction with STEEP1, promoting STING1 translocation to COPII vesicles. Ubiquitinated. Ubiquitinated via 'Lys-63'-linked ubiquitin chains in response to double-stranded DNA treatment, leading to relocalization to autophagosomes and subsequent degradation; this process is dependent on SQSTM1. 'Lys-63'-linked ubiquitination mediated by TRIM56 at Lys-150 promotes homodimerization and recruitment of the antiviral kinase TBK1 and subsequent production of IFN-beta. 'Lys-48'-linked polyubiquitination at Lys-150 occurring after viral infection is mediated by RNF5 and leads to proteasomal degradation. 'Lys-11'-linked polyubiquitination at Lys-150 by RNF26 leads to stabilize STING1: it protects STING1 from RNF5-mediated 'Lys-48'-linked polyubiquitination. 'Lys-33'-linked and 'Lys-48'-linked deubiquitinated by USP20; leading to its stabilization and promotion of innate antiviral response. 'Lys-48'-linked deubiquitinated by USP44; leading to its stabilization and promotion of innate antiviral response. Deubiquitinated by USP13; leading to inhibition of innate antiviral response. 'Lys-63'-linked deubiquitinated by USP49; leading to inhibition of the subsequent recruitment of TBK1 to the signaling complex. 'Lys-63'-linked ubiquitination mediated by RNF39 promotes the activation of the cGAS-STING pathway. MARCHF5-mediated ubiquitination prevents the oxidation-induced polymer formation. Post-translationally, sumoylated at Lys-337 by TRIM38 during the early phase of viral infection, promoting its stability by preventing its relocalization to autophagosomes and subsequent degradation. Desumoylated by SENP2 during the late phase of viral infection. In terms of processing, palmitoylation takes place in the Golgi apparatus and creates a platform for the recruitment of TBK1. In terms of tissue distribution, present in spleen and thymus tissue. Also present in dendritic cells (at protein level).

It localises to the endoplasmic reticulum membrane. It is found in the cytoplasm. The protein localises to the perinuclear region. Its subcellular location is the endoplasmic reticulum-Golgi intermediate compartment membrane. The protein resides in the golgi apparatus membrane. It localises to the cytoplasmic vesicle. It is found in the autophagosome membrane. The protein localises to the mitochondrion outer membrane. Its subcellular location is the cell membrane. The protein resides in the lysosome membrane. It carries out the reaction H(+)(in) = H(+)(out). Its activity is regulated as follows. Activated by anticancer drug 5,6-dimethylxanthenone 4-acetic acid (DMXAA). Specifically inhibited by nitrofuran derivatives C-178 and C-176, which covalently bind Cys-91 and prevent palmitoylation and subsequent activation od STING1. Functionally, facilitator of innate immune signaling that acts as a sensor of cytosolic DNA from bacteria and viruses and promotes the production of type I interferon (IFN-alpha and IFN-beta). Innate immune response is triggered in response to non-CpG double-stranded DNA from viruses and bacteria delivered to the cytoplasm. Acts by binding cyclic dinucleotides: recognizes and binds cyclic di-GMP (c-di-GMP), a second messenger produced by bacteria, cyclic UMP-AMP (2',3'-cUAMP), and cyclic GMP-AMP (cGAMP), a messenger produced by CGAS in response to DNA virus in the cytosol. Upon binding to c-di-GMP, cUAMP or cGAMP, STING1 oligomerizes, translocates from the endoplasmic reticulum and is phosphorylated by TBK1 on the pLxIS motif, leading to recruitment and subsequent activation of the transcription factor IRF3 to induce expression of type I interferon and exert a potent anti-viral state. Exhibits 2',3' phosphodiester linkage-specific ligand recognition: can bind both 2'-3' linked cGAMP (2'-3'-cGAMP) and 3'-3' linked cGAMP but is preferentially activated by 2'-3' linked cGAMP. The preference for 2'-3'-cGAMP, compared to other linkage isomers is probably due to the ligand itself, whichs adopts an organized free-ligand conformation that resembles the STING1-bound conformation and pays low energy costs in changing into the active conformation. In addition to promote the production of type I interferons, plays a direct role in autophagy. Following cGAMP-binding, STING1 buds from the endoplasmic reticulum into COPII vesicles, which then form the endoplasmic reticulum-Golgi intermediate compartment (ERGIC). The ERGIC serves as the membrane source for WIPI2 recruitment and LC3 lipidation, leading to formation of autophagosomes that target cytosolic DNA or DNA viruses for degradation by the lysosome. Promotes autophagy by acting as a proton channel that directs proton efflux from the Golgi to facilitate MAP1LC3B/LC3B lipidation. The autophagy- and interferon-inducing activities can be uncoupled and autophagy induction is independent of TBK1 phosphorylation. Autophagy is also triggered upon infection by bacteria: following c-di-GMP-binding, which is produced by live Gram-positive bacteria, promotes reticulophagy. May be involved in translocon function, the translocon possibly being able to influence the induction of type I interferons. May be involved in transduction of apoptotic signals via its association with the major histocompatibility complex class II (MHC-II). This is Stimulator of interferon genes protein from Mus musculus (Mouse).